Here is a 537-residue protein sequence, read N- to C-terminus: Glutamyl-tRNA(Gln) amidotransferase subunit B, chloroplastic/mitochondrial (537 aa).

The protein belongs to the GatB/GatE family. GatB subfamily. As to quaternary structure, subunit of the heterotrimeric GatCAB amidotransferase (AdT) complex, composed of A, B and C subunits.

It is found in the mitochondrion. The protein localises to the plastid. Its subcellular location is the chloroplast. It carries out the reaction L-glutamyl-tRNA(Gln) + L-glutamine + ATP + H2O = L-glutaminyl-tRNA(Gln) + L-glutamate + ADP + phosphate + H(+). Functionally, allows the formation of correctly charged Gln-tRNA(Gln) through the transamidation of misacylated Glu-tRNA(Gln) in chloroplasts and mitochondria. The reaction takes place in the presence of glutamine and ATP through an activated gamma-phospho-Glu-tRNA(Gln). This chain is Glutamyl-tRNA(Gln) amidotransferase subunit B, chloroplastic/mitochondrial, found in Ostreococcus tauri.